We begin with the raw amino-acid sequence, 477 residues long: Bifunctional protein HldE (477 aa).

A ribokinase region spans residues 1-318; that stretch reads MKVTLPEFER…ENAVRGRAET (318 aa). 195 to 198 is a binding site for ATP; sequence NLSE. The active site involves Asp264. Residues 344-477 form a cytidylyltransferase region; the sequence is MTNGVFDILH…IKKIQKDSDK (134 aa).

In the N-terminal section; belongs to the carbohydrate kinase PfkB family. The protein in the C-terminal section; belongs to the cytidylyltransferase family. As to quaternary structure, homodimer.

The catalysed reaction is D-glycero-beta-D-manno-heptose 7-phosphate + ATP = D-glycero-beta-D-manno-heptose 1,7-bisphosphate + ADP + H(+). It carries out the reaction D-glycero-beta-D-manno-heptose 1-phosphate + ATP + H(+) = ADP-D-glycero-beta-D-manno-heptose + diphosphate. It participates in nucleotide-sugar biosynthesis; ADP-L-glycero-beta-D-manno-heptose biosynthesis; ADP-L-glycero-beta-D-manno-heptose from D-glycero-beta-D-manno-heptose 7-phosphate: step 1/4. It functions in the pathway nucleotide-sugar biosynthesis; ADP-L-glycero-beta-D-manno-heptose biosynthesis; ADP-L-glycero-beta-D-manno-heptose from D-glycero-beta-D-manno-heptose 7-phosphate: step 3/4. Catalyzes the phosphorylation of D-glycero-D-manno-heptose 7-phosphate at the C-1 position to selectively form D-glycero-beta-D-manno-heptose-1,7-bisphosphate. Functionally, catalyzes the ADP transfer from ATP to D-glycero-beta-D-manno-heptose 1-phosphate, yielding ADP-D-glycero-beta-D-manno-heptose. The polypeptide is Bifunctional protein HldE (Klebsiella pneumoniae (strain 342)).